Reading from the N-terminus, the 745-residue chain is Aminopeptidase NAALADL1 (745 aa).

Residues 1–6 (MHWVKI) lie on the Cytoplasmic side of the membrane. The chain crosses the membrane as a helical; Signal-anchor for type II membrane protein span at residues 7–28 (LGVALGAAALLGLGIILGHFAI). Residues 29 to 745 (PKATSPLTSS…AATLVPVADL (717 aa)) lie on the Extracellular side of the membrane. Residues Asn128, Asn141, and Asn235 are each glycosylated (N-linked (GlcNAc...) asparagine). Ca(2+)-binding residues include Thr263 and Leu266. N-linked (GlcNAc...) asparagine glycosylation is found at Asn279, Asn302, and Asn329. Cys301 and Cys318 are joined by a disulfide. Zn(2+)-binding residues include His373 and Asp383. Catalysis depends on Glu421, which acts as the Proton donor/acceptor. Residue Glu422 participates in Zn(2+) binding. Residues Glu430 and Glu433 each coordinate Ca(2+). Asp450 provides a ligand contact to Zn(2+). Asn456 and Asn497 each carry an N-linked (GlcNAc...) asparagine glycan. His550 is a Zn(2+) binding site. N-linked (GlcNAc...) asparagine glycans are attached at residues Asn593 and Asn620.

This sequence belongs to the peptidase M28 family. M28B subfamily. Homodimer. Zn(2+) serves as cofactor. N-glycosylated.

It localises to the apical cell membrane. Its function is as follows. Aminopeptidase with broad substrate specificity. Has lower activity with substrates that have Asp or Glu in the P2' position, or Pro in the P3' position. Lacks activity with substrates that have both Pro in the P3' position and Asp or Glu in the P2' position. Lacks carboxypeptidase activity. Lacks dipeptidyl-peptidase IV type activity. This chain is Aminopeptidase NAALADL1 (Naaladl1), found in Mus musculus (Mouse).